The sequence spans 203 residues: uncharacterized protein (203 aa).

The chain crosses the membrane as a helical span at residues 180–200; that stretch reads VYLLLFGIPLLILIFLIIFFI.

It localises to the virion. It is found in the host membrane. This is an uncharacterized protein from Acanthamoeba polyphaga (Amoeba).